The following is a 293-amino-acid chain: 4-diphosphocytidyl-2-C-methyl-D-erythritol kinase (293 aa).

Lysine 16 is a catalytic residue. 99–109 (PMGAGLGGGSS) contributes to the ATP binding site. Residue aspartate 141 is part of the active site.

Belongs to the GHMP kinase family. IspE subfamily.

The enzyme catalyses 4-CDP-2-C-methyl-D-erythritol + ATP = 4-CDP-2-C-methyl-D-erythritol 2-phosphate + ADP + H(+). It functions in the pathway isoprenoid biosynthesis; isopentenyl diphosphate biosynthesis via DXP pathway; isopentenyl diphosphate from 1-deoxy-D-xylulose 5-phosphate: step 3/6. Functionally, catalyzes the phosphorylation of the position 2 hydroxy group of 4-diphosphocytidyl-2C-methyl-D-erythritol. The sequence is that of 4-diphosphocytidyl-2-C-methyl-D-erythritol kinase from Burkholderia lata (strain ATCC 17760 / DSM 23089 / LMG 22485 / NCIMB 9086 / R18194 / 383).